The chain runs to 435 residues: Histidinol dehydrogenase (435 aa).

NAD(+) is bound by residues tyrosine 131, glutamine 189, and asparagine 212. 3 residues coordinate substrate: serine 238, glutamine 260, and histidine 263. Zn(2+)-binding residues include glutamine 260 and histidine 263. Catalysis depends on proton acceptor residues glutamate 327 and histidine 328. Histidine 328, aspartate 361, glutamate 415, and histidine 420 together coordinate substrate. A Zn(2+)-binding site is contributed by aspartate 361. Histidine 420 serves as a coordination point for Zn(2+).

Belongs to the histidinol dehydrogenase family. As to quaternary structure, homodimer. Zn(2+) is required as a cofactor.

The catalysed reaction is L-histidinol + 2 NAD(+) + H2O = L-histidine + 2 NADH + 3 H(+). It functions in the pathway amino-acid biosynthesis; L-histidine biosynthesis; L-histidine from 5-phospho-alpha-D-ribose 1-diphosphate: step 9/9. Its function is as follows. Catalyzes the sequential NAD-dependent oxidations of L-histidinol to L-histidinaldehyde and then to L-histidine. This is Histidinol dehydrogenase (hisD) from Buchnera aphidicola subsp. Schizaphis graminum (strain Sg).